The primary structure comprises 447 residues: MGAIQAIRGTRDILPPETNYWQWVEAIAKSILDRALYQEIRTPIFEQTSLFERGIGEATDVVGKEMYSFTDRGDRPITLRPEGTAGVVRAYIEQNLQAAGGVQRLWYTGPMFRYERPQAGRQRQFHQLGVEVLGSADPRADVEVIALGTDILKALGLSNLSLALNSVGNGGDRQRYREALIAYLTPFKAELDPDSQDRLERNPLRILDSKAKRTQEIVQDAPSILDHLGVDSQRHFDQVQQLLTNLGIAYQLTPTLVRGLDYYTHTAFEIQSSDLGAQATVCGGGRYDGLVAELGGPVTPAVGWAMGLERLIILLQQMATPPAPSPDLYLISKGEKAEPQALILAQKLRNQGLAVALDLSASAFGKQFKRADKSGAIACLVLGDGEIATGTVQLKWLADKAQETLQLQDLMGNITELKQRLAGHREKYPHLTSNFSVTCHDPMDNLV.

Belongs to the class-II aminoacyl-tRNA synthetase family. As to quaternary structure, homodimer.

It localises to the cytoplasm. The catalysed reaction is tRNA(His) + L-histidine + ATP = L-histidyl-tRNA(His) + AMP + diphosphate + H(+). This Synechocystis sp. (strain ATCC 27184 / PCC 6803 / Kazusa) protein is Histidine--tRNA ligase (hisS).